A 66-amino-acid polypeptide reads, in one-letter code: Muscarinic toxin alpha (66 aa).

4 disulfides stabilise this stretch: Cys3/Cys24, Cys17/Cys42, Cys46/Cys58, and Cys59/Cys64.

This sequence belongs to the three-finger toxin family. Short-chain subfamily. Aminergic toxin sub-subfamily. As to expression, expressed by the venom gland.

Its subcellular location is the secreted. Selectively binds with high-affinity to the a2B-adrenoceptor subtype (ADRA2B). The toxin reversibly binds to ADRA2B, and its mode of inhibition is non-competitive. The toxin has also been described to bind with high affinity to all muscarinic receptor subtypes (Ki=23 nM (on CHRM1), Ki=44 nM (on CHRM2), Ki=3 nM (on CHRM3), Ki=5 nM (on CHRM4), and Ki=8 nM (on CHRM5)) but no other data support these affinity values. The sequence is that of Muscarinic toxin alpha from Dendroaspis polylepis polylepis (Black mamba).